The primary structure comprises 687 residues: Glycine--tRNA ligase beta subunit (687 aa).

Belongs to the class-II aminoacyl-tRNA synthetase family. Tetramer of two alpha and two beta subunits.

It localises to the cytoplasm. The enzyme catalyses tRNA(Gly) + glycine + ATP = glycyl-tRNA(Gly) + AMP + diphosphate. The sequence is that of Glycine--tRNA ligase beta subunit from Lactobacillus helveticus (strain DPC 4571).